Reading from the N-terminus, the 308-residue chain is Ribosomal RNA small subunit methyltransferase H (308 aa).

S-adenosyl-L-methionine contacts are provided by residues 36–38 (GGH), Asp55, Phe82, Asp103, and Gln110.

This sequence belongs to the methyltransferase superfamily. RsmH family.

Its subcellular location is the cytoplasm. The enzyme catalyses cytidine(1402) in 16S rRNA + S-adenosyl-L-methionine = N(4)-methylcytidine(1402) in 16S rRNA + S-adenosyl-L-homocysteine + H(+). Its function is as follows. Specifically methylates the N4 position of cytidine in position 1402 (C1402) of 16S rRNA. This chain is Ribosomal RNA small subunit methyltransferase H, found in Helicobacter pylori (strain J99 / ATCC 700824) (Campylobacter pylori J99).